The sequence spans 176 residues: Large ribosomal subunit protein eL20 (176 aa).

Residue K11 forms a Glycyl lysine isopeptide (Lys-Gly) (interchain with G-Cter in SUMO2) linkage. Phosphotyrosine is present on Y63. A Phosphoserine modification is found at S71. K76 bears the N6-succinyllysine mark. S123 carries the post-translational modification Phosphoserine. Residues K128 and K170 each participate in a glycyl lysine isopeptide (Lys-Gly) (interchain with G-Cter in SUMO2) cross-link.

Belongs to the eukaryotic ribosomal protein eL20 family. As to quaternary structure, component of the large ribosomal subunit. Binds IPO9 with high affinity.

It localises to the cytoplasm. Functionally, component of the large ribosomal subunit. The ribosome is a large ribonucleoprotein complex responsible for the synthesis of proteins in the cell. The protein is Large ribosomal subunit protein eL20 (RPL18A) of Bos taurus (Bovine).